The primary structure comprises 197 residues: Large ribosomal subunit protein bL25 (197 aa).

It belongs to the bacterial ribosomal protein bL25 family. CTC subfamily. Part of the 50S ribosomal subunit; part of the 5S rRNA/L5/L18/L25 subcomplex. Contacts the 5S rRNA. Binds to the 5S rRNA independently of L5 and L18.

In terms of biological role, this is one of the proteins that binds to the 5S RNA in the ribosome where it forms part of the central protuberance. In Pseudomonas putida (strain ATCC 700007 / DSM 6899 / JCM 31910 / BCRC 17059 / LMG 24140 / F1), this protein is Large ribosomal subunit protein bL25.